The primary structure comprises 175 residues: Large ribosomal subunit protein uL10 (175 aa).

It belongs to the universal ribosomal protein uL10 family. Part of the ribosomal stalk of the 50S ribosomal subunit. The N-terminus interacts with L11 and the large rRNA to form the base of the stalk. The C-terminus forms an elongated spine to which L12 dimers bind in a sequential fashion forming a multimeric L10(L12)X complex.

Its function is as follows. Forms part of the ribosomal stalk, playing a central role in the interaction of the ribosome with GTP-bound translation factors. The chain is Large ribosomal subunit protein uL10 from Prochlorococcus marinus (strain MIT 9301).